A 360-amino-acid chain; its full sequence is Peptide chain release factor 1 (360 aa).

The residue at position 237 (Gln-237) is an N5-methylglutamine.

Belongs to the prokaryotic/mitochondrial release factor family. In terms of processing, methylated by PrmC. Methylation increases the termination efficiency of RF1.

Its subcellular location is the cytoplasm. Its function is as follows. Peptide chain release factor 1 directs the termination of translation in response to the peptide chain termination codons UAG and UAA. The chain is Peptide chain release factor 1 from Teredinibacter turnerae (strain ATCC 39867 / T7901).